The following is a 481-amino-acid chain: F-box/LRR-repeat protein At3g03360 (481 aa).

The tract at residues 1–28 (MEKESQENSTRPDASSTVFSSSKSTCAS) is disordered. The segment covering 14-28 (ASSTVFSSSKSTCAS) has biased composition (low complexity). The region spanning 36–84 (GDLISRLPDDILQLILSYLPTRLAIKTSVLSRRWRHVWSDTWSLSFHRD) is the F-box domain. 5 LRR repeats span residues 118 to 145 (SRPD…SLYL), 196 to 221 (HCNI…LLFF), 295 to 320 (EADF…TLGA), 350 to 375 (ISRY…TIHP), and 413 to 439 (RRNV…ELIV).

This chain is F-box/LRR-repeat protein At3g03360, found in Arabidopsis thaliana (Mouse-ear cress).